The primary structure comprises 784 residues: Ribosome biogenesis protein BOP1 homolog (784 aa).

Over residues 1 to 11 (MTKKLALKRKG) the composition is skewed to basic residues. The tract at residues 1-159 (MTKKLALKRK…DSDTSDEEDI (159 aa)) is disordered. Acidic residues-rich tracts occupy residues 27-36 (SENEEEEEDL), 45-54 (EDSTDDEGID), 62-73 (SEELQFESDEEG), and 84-111 (AEEDEESSDEDDDEEEGSSDEEGEEDEE). The segment covering 112–123 (KDSKSKQADDKP) has biased composition (basic and acidic residues). Residues 124-133 (SSSGAASKKA) show a composition bias toward low complexity. Residues 138 to 148 (LSKRDTSKPEY) show a composition bias toward basic and acidic residues. Residues 149 to 158 (QDSDTSDEED) are compositionally biased toward acidic residues. 7 WD repeats span residues 445-486 (GHTD…RTIE), 488-526 (DEVVRCVAWCPNPKLSIIAVATGNRLLLVNPKVGDKVLV), 570-612 (THFK…SQIP), 615-653 (KSKGLIQFVLFHPVKPCFFVATQHNIRIYDLVKQELVKK), 656-695 (TNSKWISGMSIHPKGDNLLVSTYDKKMLWFDLDLSTKPYQ), 699-738 (LHRNAVRSVAFHLRYPLFASGSDDQAVIVSHGMVYNDLLQ), and 754-784 (RDEFGVLDVNWHPVQPWIFSTGADSTIRLYT).

This sequence belongs to the WD repeat BOP1/ERB1 family.

The protein resides in the nucleus. Its subcellular location is the nucleolus. It localises to the nucleoplasm. Its function is as follows. Required for maturation of ribosomal RNAs and formation of the large ribosomal subunit. This is Ribosome biogenesis protein BOP1 homolog from Drosophila yakuba (Fruit fly).